The following is a 431-amino-acid chain: UDP-N-acetylglucosamine 1-carboxyvinyltransferase (431 aa).

22-23 contributes to the phosphoenolpyruvate binding site; it reads KN. R93 serves as a coordination point for UDP-N-acetyl-alpha-D-glucosamine. Catalysis depends on C117, which acts as the Proton donor. At C117 the chain carries 2-(S-cysteinyl)pyruvic acid O-phosphothioketal. The UDP-N-acetyl-alpha-D-glucosamine site is built by D307 and V329.

Belongs to the EPSP synthase family. MurA subfamily.

The protein localises to the cytoplasm. The catalysed reaction is phosphoenolpyruvate + UDP-N-acetyl-alpha-D-glucosamine = UDP-N-acetyl-3-O-(1-carboxyvinyl)-alpha-D-glucosamine + phosphate. Its pathway is cell wall biogenesis; peptidoglycan biosynthesis. In terms of biological role, cell wall formation. Adds enolpyruvyl to UDP-N-acetylglucosamine. In Nitrosococcus oceani (strain ATCC 19707 / BCRC 17464 / JCM 30415 / NCIMB 11848 / C-107), this protein is UDP-N-acetylglucosamine 1-carboxyvinyltransferase.